Reading from the N-terminus, the 392-residue chain is MVEADRPGKLFIGGLNLETDEKALEAEFGKYGRIVEVLLMKDRETNKSRGFAFVTFESPADAKAAARDMNGKSLDGKAIKVAQATKPAFESSRRGPPPPRSRGRPRFLRGTRGGGGGPRRSPSRGGPDDDGGYTADFDLRPSRAPMPMKRGPPPRRVGPPPKRAAPSGPARSSGGGMRGRALAVRGRDGYSGPPRREPLPPRRDPYLGPRDEGYSSRDGYSSRDYREPRGFAPSPGEYTHRDYGHSSVRDDCPLRGYSDRDGYGGRDRDYGDHLSRGSHREPFESYGELRGAAPGRGTPPSYGGGGRYEEYRGYSPDAYSGGRDSYSSSYGRSDRYSRGRHRVGRPDRGLSLSMERGCPPQRDSYSRSGCRVPRGGGRLGGRLERGGGRSRY.

The RRM domain occupies 8–86; the sequence is GKLFIGGLNL…KAIKVAQATK (79 aa). The segment covering 67-78 has biased composition (basic and acidic residues); that stretch reads RDMNGKSLDGKA. Positions 67–392 are disordered; sequence RDMNGKSLDG…LERGGGRSRY (326 aa). Pro residues predominate over residues 150-163; that stretch reads RGPPPRRVGPPPKR. Basic and acidic residues-rich tracts occupy residues 194–229 and 238–283; these read PRRE…REPR and YTHR…REPF. Low complexity predominate over residues 319–331; that stretch reads YSGGRDSYSSSYG. The segment covering 381 to 392 has biased composition (basic and acidic residues); that stretch reads GRLERGGGRSRY.

Expressed predominantly in spermatocytes and less in round spermatids (at protein level). Expressed in germ cells.

It localises to the nucleus. The sequence is that of RNA-binding motif protein, X-linked-like-2 (RBMXL2) from Homo sapiens (Human).